The chain runs to 290 residues: MSDAGHVDAVCKPLGAADIRELARSAGVRPRKTFGQHFVVDPGVLRKIARYAELSSEDIALEIGPGFGSLTLVLLPLVRRLLAVEIDRVLAAVLPETIRRRCPAFADRLVVVHGDVLRLTTLPDDPTVLVANLPYNVAVPAVLRVFERFSTVTRTVIMVQREVAERLCADPGSPAYGAPSIKLRWYGRARIVGSVSADVFWPRPQVESAVVRIDRQPPPVPGVDRAAVFAVIDAAFAQRRKMLRRALSGWAGSAQAAEERILAAGLRPTDRGEALTLADFIRLAQAPPTR.

The S-adenosyl-L-methionine site is built by histidine 37, valine 39, glycine 64, glutamate 85, aspartate 115, and asparagine 132.

Belongs to the class I-like SAM-binding methyltransferase superfamily. rRNA adenine N(6)-methyltransferase family. RsmA subfamily.

The protein localises to the cytoplasm. The catalysed reaction is adenosine(1518)/adenosine(1519) in 16S rRNA + 4 S-adenosyl-L-methionine = N(6)-dimethyladenosine(1518)/N(6)-dimethyladenosine(1519) in 16S rRNA + 4 S-adenosyl-L-homocysteine + 4 H(+). In terms of biological role, specifically dimethylates two adjacent adenosines (A1518 and A1519) in the loop of a conserved hairpin near the 3'-end of 16S rRNA in the 30S particle. May play a critical role in biogenesis of 30S subunits. This Acidothermus cellulolyticus (strain ATCC 43068 / DSM 8971 / 11B) protein is Ribosomal RNA small subunit methyltransferase A.